Consider the following 106-residue polypeptide: Pyrimidine/purine nucleoside phosphorylase (106 aa).

The protein belongs to the nucleoside phosphorylase PpnP family.

The catalysed reaction is a purine D-ribonucleoside + phosphate = a purine nucleobase + alpha-D-ribose 1-phosphate. It catalyses the reaction adenosine + phosphate = alpha-D-ribose 1-phosphate + adenine. It carries out the reaction cytidine + phosphate = cytosine + alpha-D-ribose 1-phosphate. The enzyme catalyses guanosine + phosphate = alpha-D-ribose 1-phosphate + guanine. The catalysed reaction is inosine + phosphate = alpha-D-ribose 1-phosphate + hypoxanthine. It catalyses the reaction thymidine + phosphate = 2-deoxy-alpha-D-ribose 1-phosphate + thymine. It carries out the reaction uridine + phosphate = alpha-D-ribose 1-phosphate + uracil. The enzyme catalyses xanthosine + phosphate = alpha-D-ribose 1-phosphate + xanthine. Catalyzes the phosphorolysis of diverse nucleosides, yielding D-ribose 1-phosphate and the respective free bases. Can use uridine, adenosine, guanosine, cytidine, thymidine, inosine and xanthosine as substrates. Also catalyzes the reverse reactions. This chain is Pyrimidine/purine nucleoside phosphorylase, found in Burkholderia cenocepacia (strain ATCC BAA-245 / DSM 16553 / LMG 16656 / NCTC 13227 / J2315 / CF5610) (Burkholderia cepacia (strain J2315)).